A 237-amino-acid polypeptide reads, in one-letter code: Ribonuclease PH (237 aa).

Phosphate is bound by residues arginine 86 and 124–126 (GTR).

It belongs to the RNase PH family. Homohexameric ring arranged as a trimer of dimers.

It catalyses the reaction tRNA(n+1) + phosphate = tRNA(n) + a ribonucleoside 5'-diphosphate. Phosphorolytic 3'-5' exoribonuclease that plays an important role in tRNA 3'-end maturation. Removes nucleotide residues following the 3'-CCA terminus of tRNAs; can also add nucleotides to the ends of RNA molecules by using nucleoside diphosphates as substrates, but this may not be physiologically important. Probably plays a role in initiation of 16S rRNA degradation (leading to ribosome degradation) during starvation. In Shewanella denitrificans (strain OS217 / ATCC BAA-1090 / DSM 15013), this protein is Ribonuclease PH.